Reading from the N-terminus, the 270-residue chain is uncharacterized protein (270 aa).

The N-terminal stretch at 1–22 (MEYIKKIALYMSVLLLIIFIGG) is a signal peptide. Cysteine 23 is lipidated: N-palmitoyl cysteine. Cysteine 23 carries the S-diacylglycerol cysteine lipid modification.

Belongs to the staphylococcal tandem lipoprotein family.

It localises to the cell membrane. This is an uncharacterized protein from Staphylococcus aureus (strain MW2).